A 149-amino-acid polypeptide reads, in one-letter code: MKFRGHAHRSMDAKGRLMLTPEYRDQVYSDSPDGCVTLTIFEGNIVGFTPPDWAILEEKLTSIKSPSRKLRNFIRIIISGSEEVSLDKQGRITIPSYLRKSGKLDKDVVLAGVGDRFEIWDKREYEALLEQDFDDVSDELAECGVELPF.

SpoVT-AbrB domains follow at residues 6 to 52 and 81 to 124; these read HAHR…TPPD and SEEV…DKRE.

Belongs to the MraZ family. Forms oligomers.

The protein resides in the cytoplasm. Its subcellular location is the nucleoid. This chain is Transcriptional regulator MraZ, found in Maridesulfovibrio salexigens (strain ATCC 14822 / DSM 2638 / NCIMB 8403 / VKM B-1763) (Desulfovibrio salexigens).